Here is a 726-residue protein sequence, read N- to C-terminus: NHL repeat-containing protein 2 (726 aa).

6 NHL repeats span residues 212 to 254, 265 to 307, 335 to 369, 409 to 439, 461 to 505, and 518 to 562; these read KLYK…VWKN, NPGR…IDLE, ISSP…IWAL, FAQP…VRTV, AFGD…VDPK, and ASNM…LDLE.

In terms of assembly, monomer.

The protein localises to the cytoplasm. It localises to the cytosol. Required for normal embryonic development. The polypeptide is NHL repeat-containing protein 2 (NHLRC2) (Bos taurus (Bovine)).